Here is a 430-residue protein sequence, read N- to C-terminus: Tyrosine--tRNA ligase (430 aa).

Tyrosine 36 is an L-tyrosine binding site. The 'HIGH' region motif lies at 41-50 (PTASSLHVGS). L-tyrosine is bound by residues tyrosine 170 and glutamine 174. The 'KMSKS' region motif lies at 230–234 (KMGKT). Residue lysine 233 participates in ATP binding. The S4 RNA-binding domain maps to 362 to 427 (VPAFELFDEI…GKKNYHRLVL (66 aa)).

Belongs to the class-I aminoacyl-tRNA synthetase family. TyrS type 1 subfamily. As to quaternary structure, homodimer.

The protein resides in the cytoplasm. It carries out the reaction tRNA(Tyr) + L-tyrosine + ATP = L-tyrosyl-tRNA(Tyr) + AMP + diphosphate + H(+). Catalyzes the attachment of tyrosine to tRNA(Tyr) in a two-step reaction: tyrosine is first activated by ATP to form Tyr-AMP and then transferred to the acceptor end of tRNA(Tyr). This chain is Tyrosine--tRNA ligase, found in Desulfatibacillum aliphaticivorans.